Consider the following 195-residue polypeptide: uncharacterized protein (195 aa).

Positions 1-20 are cleaved as a signal peptide; the sequence is MLKFRLILTVLTVLLITVNG. A disordered region spans residues 26–195; sequence IENKSSTSSS…LHNQYPPQQN (170 aa). A glycan (N-linked (GlcNAc...) asparagine) is linked at N28. Composition is skewed to low complexity over residues 29–43 and 74–104; these read KSST…SKPS and QSKT…GGNQ. 2 stretches are compositionally biased toward polar residues: residues 112-123 and 151-176; these read DPYQTGSYQGPY and PKNT…NNGP.

In terms of tissue distribution, component of the acid-soluble organic matrix of calcified layers of the shell (at protein level).

It is found in the secreted. This is an uncharacterized protein from Lottia gigantea (Giant owl limpet).